Consider the following 210-residue polypeptide: Large ribosomal subunit protein uL3 (210 aa).

N5-methylglutamine is present on Gln-151.

This sequence belongs to the universal ribosomal protein uL3 family. In terms of assembly, part of the 50S ribosomal subunit. Forms a cluster with proteins L14 and L19. Methylated by PrmB.

One of the primary rRNA binding proteins, it binds directly near the 3'-end of the 23S rRNA, where it nucleates assembly of the 50S subunit. This chain is Large ribosomal subunit protein uL3, found in Aeromonas hydrophila subsp. hydrophila (strain ATCC 7966 / DSM 30187 / BCRC 13018 / CCUG 14551 / JCM 1027 / KCTC 2358 / NCIMB 9240 / NCTC 8049).